Reading from the N-terminus, the 130-residue chain is Small ribosomal subunit protein uS11 (130 aa).

This sequence belongs to the universal ribosomal protein uS11 family. As to quaternary structure, part of the 30S ribosomal subunit. Interacts with proteins S7 and S18. Binds to IF-3.

In terms of biological role, located on the platform of the 30S subunit, it bridges several disparate RNA helices of the 16S rRNA. Forms part of the Shine-Dalgarno cleft in the 70S ribosome. The sequence is that of Small ribosomal subunit protein uS11 from Dehalococcoides mccartyi (strain ATCC BAA-2100 / JCM 16839 / KCTC 5957 / BAV1).